Consider the following 212-residue polypeptide: Orotate phosphoribosyltransferase (212 aa).

Lys-26 lines the 5-phospho-alpha-D-ribose 1-diphosphate pocket. Orotate is bound at residue 34 to 35 (FF). 5-phospho-alpha-D-ribose 1-diphosphate is bound by residues 72 to 73 (YK), Arg-98, Lys-99, Lys-102, His-104, and 123 to 131 (DDVITAGTA). Thr-127 and Arg-155 together coordinate orotate.

The protein belongs to the purine/pyrimidine phosphoribosyltransferase family. PyrE subfamily. As to quaternary structure, homodimer. It depends on Mg(2+) as a cofactor.

The enzyme catalyses orotidine 5'-phosphate + diphosphate = orotate + 5-phospho-alpha-D-ribose 1-diphosphate. Its pathway is pyrimidine metabolism; UMP biosynthesis via de novo pathway; UMP from orotate: step 1/2. Functionally, catalyzes the transfer of a ribosyl phosphate group from 5-phosphoribose 1-diphosphate to orotate, leading to the formation of orotidine monophosphate (OMP). This chain is Orotate phosphoribosyltransferase, found in Marinobacter nauticus (strain ATCC 700491 / DSM 11845 / VT8) (Marinobacter aquaeolei).